The following is a 358-amino-acid chain: Photosystem II protein D1 2 (358 aa).

The next 3 helical transmembrane spans lie at 28 to 45 (YVGWFGVLMIPCLLAATI), 117 to 132 (HFLIGISAYMGRQWEL), and 141 to 155 (WICVAYAAPLSAAMV). His-117 provides a ligand contact to chlorophyll a. Tyr-125 is a pheophytin a binding site. 2 residues coordinate [CaMn4O5] cluster: Asp-169 and Glu-188. A helical membrane pass occupies residues 196–217 (FHMLGVAGVFGGSLFSAMHGSL). Residue His-197 coordinates chlorophyll a. A quinone is bound by residues His-214 and 263–264 (SF). His-214 lines the Fe cation pocket. A Fe cation-binding site is contributed by His-271. The helical transmembrane segment at 273–287 (FLAAWPVVGIWFTSM) threads the bilayer. [CaMn4O5] cluster contacts are provided by His-331, Glu-332, Asp-341, and Ala-343. Residues 344 to 358 (TTESAPVALQAPAVG) constitute a propeptide that is removed on maturation.

This sequence belongs to the reaction center PufL/M/PsbA/D family. As to quaternary structure, PSII is composed of 1 copy each of membrane proteins PsbA, PsbB, PsbC, PsbD, PsbE, PsbF, PsbH, PsbI, PsbJ, PsbK, PsbL, PsbM, PsbT, PsbX, PsbY, PsbZ, Psb30/Ycf12, peripheral proteins PsbO, CyanoQ (PsbQ), PsbU, PsbV and a large number of cofactors. It forms dimeric complexes. The cofactor is The D1/D2 heterodimer binds P680, chlorophylls that are the primary electron donor of PSII, and subsequent electron acceptors. It shares a non-heme iron and each subunit binds pheophytin, quinone, additional chlorophylls, carotenoids and lipids. D1 provides most of the ligands for the Mn4-Ca-O5 cluster of the oxygen-evolving complex (OEC). There is also a Cl(-1) ion associated with D1 and D2, which is required for oxygen evolution. The PSII complex binds additional chlorophylls, carotenoids and specific lipids.. Tyr-160 forms a radical intermediate that is referred to as redox-active TyrZ, YZ or Y-Z. In terms of processing, C-terminally processed by CtpA; processing is essential to allow assembly of the oxygen-evolving complex and thus photosynthetic growth.

The protein localises to the cellular thylakoid membrane. It catalyses the reaction 2 a plastoquinone + 4 hnu + 2 H2O = 2 a plastoquinol + O2. Photosystem II (PSII) is a light-driven water:plastoquinone oxidoreductase that uses light energy to abstract electrons from H(2)O, generating O(2) and a proton gradient subsequently used for ATP formation. It consists of a core antenna complex that captures photons, and an electron transfer chain that converts photonic excitation into a charge separation. The D1/D2 (PsbA/PsbD) reaction center heterodimer binds P680, the primary electron donor of PSII as well as several subsequent electron acceptors. This Synechococcus sp. (strain RCC307) protein is Photosystem II protein D1 2.